The chain runs to 152 residues: Large ribosomal subunit protein bL9 (152 aa).

Belongs to the bacterial ribosomal protein bL9 family.

In terms of biological role, binds to the 23S rRNA. The polypeptide is Large ribosomal subunit protein bL9 (Microcystis aeruginosa (strain NIES-843 / IAM M-2473)).